Consider the following 483-residue polypeptide: UDP-N-acetylmuramoyl-L-alanyl-D-glutamate--2,6-diaminopimelate ligase (483 aa).

UDP-N-acetyl-alpha-D-muramoyl-L-alanyl-D-glutamate is bound at residue Ser-30. 109 to 115 (GTNGKTT) is an ATP binding site. UDP-N-acetyl-alpha-D-muramoyl-L-alanyl-D-glutamate contacts are provided by residues 151–152 (TT), Ser-178, and Arg-186. At Lys-218 the chain carries N6-carboxylysine. Meso-2,6-diaminopimelate contacts are provided by residues Arg-380, 403–406 (DNPR), Gly-453, and Glu-457. Positions 403 to 406 (DNPR) match the Meso-diaminopimelate recognition motif motif.

It belongs to the MurCDEF family. MurE subfamily. The cofactor is Mg(2+). Carboxylation is probably crucial for Mg(2+) binding and, consequently, for the gamma-phosphate positioning of ATP.

Its subcellular location is the cytoplasm. The catalysed reaction is UDP-N-acetyl-alpha-D-muramoyl-L-alanyl-D-glutamate + meso-2,6-diaminopimelate + ATP = UDP-N-acetyl-alpha-D-muramoyl-L-alanyl-gamma-D-glutamyl-meso-2,6-diaminopimelate + ADP + phosphate + H(+). The protein operates within cell wall biogenesis; peptidoglycan biosynthesis. Functionally, catalyzes the addition of meso-diaminopimelic acid to the nucleotide precursor UDP-N-acetylmuramoyl-L-alanyl-D-glutamate (UMAG) in the biosynthesis of bacterial cell-wall peptidoglycan. This Chlamydia muridarum (strain MoPn / Nigg) protein is UDP-N-acetylmuramoyl-L-alanyl-D-glutamate--2,6-diaminopimelate ligase.